The sequence spans 441 residues: MAIHKALVMCLGLPLFLFPGAWAQGHVPPGCSQGLNPLYYNLCDRSGAWGIVLEAVAGAGIVTTFVLTIILVASLPFVQDTKKRSLLGTQVFFLLGTLGLFCLVFACVVKPDFSTCASRRFLFGVLFAICFSCLAAHVFALNFLARKNHGPRGWVIFTVALLLTLVEVIINTEWLIITLVRGSGEGGPQGNSSAGWAVASPCAIANMDFVMALIYVMLLLLGAFLGAWPALCGRYKRWRKHGVFVLLTTATSVAIWVVWIVMYTYGNKQHNSPTWDDPTLAIALAANAWAFVLFYVIPEVSQVTKSSPEQSYQGDMYPTRGVGYETILKEQKGQSMFVENKAFSMDEPVAAKRPVSPYSGYNGQLLTSVYQPTEMALMHKVPSEGAYDIILPRATANSQVMGSANSTLRAEDMYSAQSHQAATPPKDGKNSQVFRNPYVWD.

An N-terminal signal peptide occupies residues 1–23 (MAIHKALVMCLGLPLFLFPGAWA). The Extracellular segment spans residues 24 to 50 (QGHVPPGCSQGLNPLYYNLCDRSGAWG). Residues 51 to 71 (IVLEAVAGAGIVTTFVLTIIL) traverse the membrane as a helical segment. The Cytoplasmic segment spans residues 72-85 (VASLPFVQDTKKRS). Residues 86-106 (LLGTQVFFLLGTLGLFCLVFA) traverse the membrane as a helical segment. Over 107–120 (CVVKPDFSTCASRR) the chain is Extracellular. A helical transmembrane segment spans residues 121-141 (FLFGVLFAICFSCLAAHVFAL). The Cytoplasmic portion of the chain corresponds to 142 to 155 (NFLARKNHGPRGWV). A helical membrane pass occupies residues 156-176 (IFTVALLLTLVEVIINTEWLI). Residues 177-208 (ITLVRGSGEGGPQGNSSAGWAVASPCAIANMD) lie on the Extracellular side of the membrane. Asn-191 carries N-linked (GlcNAc...) asparagine glycosylation. Residues 209–229 (FVMALIYVMLLLLGAFLGAWP) form a helical membrane-spanning segment. Topologically, residues 230-241 (ALCGRYKRWRKH) are cytoplasmic. The helical transmembrane segment at 242-262 (GVFVLLTTATSVAIWVVWIVM) threads the bilayer. Over 263–279 (YTYGNKQHNSPTWDDPT) the chain is Extracellular. Residues 280-300 (LAIALAANAWAFVLFYVIPEV) form a helical membrane-spanning segment. Residues 301-441 (SQVTKSSPEQ…QVFRNPYVWD (141 aa)) lie on the Cytoplasmic side of the membrane. 4 positions are modified to phosphoserine: Ser-344, Ser-383, Ser-403, and Ser-406. A disordered region spans residues 412–441 (DMYSAQSHQAATPPKDGKNSQVFRNPYVWD). Residue Tyr-414 is modified to Phosphotyrosine. Thr-423 bears the Phosphothreonine mark.

This sequence belongs to the G-protein coupled receptor 3 family. Expression is highest in the periphery, particularly in the stomach, but also in the kidney, liver, pancreas, and prostate. In brain, levels of expression are generally lower than in the periphery, with the exception of cerebellum, spinal cord, and dorsal root ganglia (DRG).

The protein resides in the cell membrane. Its subcellular location is the cytoplasmic vesicle membrane. Its function is as follows. This retinoic acid-inducible G-protein coupled receptor provide evidence for a possible interaction between retinoid and G-protein signaling pathways. This chain is G-protein coupled receptor family C group 5 member C (GPRC5C), found in Homo sapiens (Human).